The primary structure comprises 385 residues: NADH-quinone oxidoreductase subunit H (385 aa).

A run of 8 helical transmembrane segments spans residues 14–34, 80–100, 130–150, 172–192, 219–239, 280–300, 325–345, and 365–385; these read GLKLVVIFLMMVQAVPILVWL, FLYYAAPIFALIPGAVAFSAI, IGVGIVFILGVSSLAAYTLLM, ISYELALGLSIVGVIMLYGTF, LPNWGIFYQPVGALLFFSAAF, MMIASGLMVLFFFGGYTIPYV, LIHFLVFNIKFGFFMWVFIWV, and MLPWALANTIITAFVIYIASL.

It belongs to the complex I subunit 1 family. In terms of assembly, NDH-1 is composed of 14 different subunits. Subunits NuoA, H, J, K, L, M, N constitute the membrane sector of the complex.

The protein resides in the cell inner membrane. The catalysed reaction is a quinone + NADH + 5 H(+)(in) = a quinol + NAD(+) + 4 H(+)(out). Its function is as follows. NDH-1 shuttles electrons from NADH, via FMN and iron-sulfur (Fe-S) centers, to quinones in the respiratory chain. The immediate electron acceptor for the enzyme in this species is believed to be ubiquinone. Couples the redox reaction to proton translocation (for every two electrons transferred, four hydrogen ions are translocated across the cytoplasmic membrane), and thus conserves the redox energy in a proton gradient. This subunit may bind ubiquinone. This chain is NADH-quinone oxidoreductase subunit H, found in Bdellovibrio bacteriovorus (strain ATCC 15356 / DSM 50701 / NCIMB 9529 / HD100).